We begin with the raw amino-acid sequence, 195 residues long: Penicillin-binding protein activator LpoB (195 aa).

Residues 1-16 (MKKYLFVALAALVLTG) form the signal peptide. Cys-17 is lipidated: N-palmitoyl cysteine. The S-diacylglycerol cysteine moiety is linked to residue Cys-17. Residues 19 to 55 (SRPPEPEQPQPPVTVEPVTPPVVEEPQPPVTEPVPQP) are disordered. Composition is skewed to pro residues over residues 24 to 38 (PEQP…PVTP) and 44 to 55 (PQPPVTEPVPQP).

It belongs to the LpoB family. In terms of assembly, interacts with PBP1b.

Its subcellular location is the cell outer membrane. Regulator of peptidoglycan synthesis that is essential for the function of penicillin-binding protein 1B (PBP1b). In Serratia proteamaculans (strain 568), this protein is Penicillin-binding protein activator LpoB.